Here is a 341-residue protein sequence, read N- to C-terminus: MNNYLRKLVEGQHLTEEEMYKAGLLLLSENILESEIAAFLVLLKAKGETAEEIYGLVRALREKALPFSNHIQGAMDNCGTGGDGAQTFNISTTSAFVLAGAGVKVAKHGNRAVSSKTGSADLLEELGVNISSTPNEIDYLLEHVGIAFLFAPVMHPALRRIMKIRKELNVPTIFNLIGPLTNPVNLETQFVGIYKRDMLLPVAEVLQKLGRKQALVVNGSGFLDEASLQGENHVVLLKDNEIVEMSIDPEKYGFSRVKNEEIRGGNSKENAKITLEVLSGEKSVYRDTVLLNAGLALFANGKTETIEEGIKLAAHSIDSGKALTKLNLLIAASNEKLERVN.

Residues glycine 79, 82-83, threonine 87, 89-92, 107-115, and serine 119 contribute to the 5-phospho-alpha-D-ribose 1-diphosphate site; these read GD, NIST, and KHGNRAVSS. Position 79 (glycine 79) interacts with anthranilate. Serine 91 lines the Mg(2+) pocket. Asparagine 110 provides a ligand contact to anthranilate. Arginine 165 lines the anthranilate pocket. Residues aspartate 224 and glutamate 225 each coordinate Mg(2+).

This sequence belongs to the anthranilate phosphoribosyltransferase family. In terms of assembly, homodimer. It depends on Mg(2+) as a cofactor.

The enzyme catalyses N-(5-phospho-beta-D-ribosyl)anthranilate + diphosphate = 5-phospho-alpha-D-ribose 1-diphosphate + anthranilate. It participates in amino-acid biosynthesis; L-tryptophan biosynthesis; L-tryptophan from chorismate: step 2/5. Catalyzes the transfer of the phosphoribosyl group of 5-phosphorylribose-1-pyrophosphate (PRPP) to anthranilate to yield N-(5'-phosphoribosyl)-anthranilate (PRA). In Bacillus cereus (strain B4264), this protein is Anthranilate phosphoribosyltransferase.